A 343-amino-acid chain; its full sequence is Cathepsin Q (343 aa).

Positions 1–20 (MTPAVFLVILCLGVVPGASA) are cleaved as a signal peptide. A propeptide spans 21–124 (LDLSLDVQWQ…FPNSWNWRDA (104 aa)) (activation peptide). 2 disulfides stabilise this stretch: Cys146–Cys189 and Cys180–Cys222. Cys149 is an active-site residue. A glycan (N-linked (GlcNAc...) asparagine) is linked at Asn228. Cysteines 280 and 332 form a disulfide. His286 is an active-site residue. Residue Asn298 is glycosylated (N-linked (GlcNAc...) asparagine). Residue Asn310 is part of the active site.

Belongs to the peptidase C1 family. Highly expressed in placenta.

The protein resides in the lysosome. The protein is Cathepsin Q (Ctsq) of Rattus norvegicus (Rat).